Here is a 341-residue protein sequence, read N- to C-terminus: L-threonine 3-dehydrogenase (341 aa).

Cys-38 lines the Zn(2+) pocket. Active-site charge relay system residues include Thr-40 and His-43. Residues His-63, Glu-64, Cys-93, Cys-96, Cys-99, and Cys-107 each contribute to the Zn(2+) site. Residues Ile-175, Asp-195, Arg-200, 262 to 264 (LGI), and 286 to 287 (IY) each bind NAD(+).

This sequence belongs to the zinc-containing alcohol dehydrogenase family. In terms of assembly, homotetramer. The cofactor is Zn(2+).

The protein resides in the cytoplasm. It catalyses the reaction L-threonine + NAD(+) = (2S)-2-amino-3-oxobutanoate + NADH + H(+). Its pathway is amino-acid degradation; L-threonine degradation via oxydo-reductase pathway; glycine from L-threonine: step 1/2. Its function is as follows. Catalyzes the NAD(+)-dependent oxidation of L-threonine to 2-amino-3-ketobutyrate. This is L-threonine 3-dehydrogenase from Shigella boydii serotype 4 (strain Sb227).